The chain runs to 385 residues: Putative nickel insertion protein (385 aa).

Belongs to the LarC family.

This Citrifermentans bemidjiense (strain ATCC BAA-1014 / DSM 16622 / JCM 12645 / Bem) (Geobacter bemidjiensis) protein is Putative nickel insertion protein.